A 168-amino-acid chain; its full sequence is 3-hydroxyacyl-[acyl-carrier-protein] dehydratase FabZ (168 aa).

The active site involves histidine 54.

It belongs to the thioester dehydratase family. FabZ subfamily.

Its subcellular location is the cytoplasm. The enzyme catalyses a (3R)-hydroxyacyl-[ACP] = a (2E)-enoyl-[ACP] + H2O. In terms of biological role, involved in unsaturated fatty acids biosynthesis. Catalyzes the dehydration of short chain beta-hydroxyacyl-ACPs and long chain saturated and unsaturated beta-hydroxyacyl-ACPs. In Yersinia enterocolitica serotype O:8 / biotype 1B (strain NCTC 13174 / 8081), this protein is 3-hydroxyacyl-[acyl-carrier-protein] dehydratase FabZ.